Here is a 212-residue protein sequence, read N- to C-terminus: Prolactin (212 aa).

Residues 1 to 24 (MAQRKTNGSKLFMMVLYMVAACSA) form the signal peptide. Disulfide bonds link Cys70–Cys185 and Cys202–Cys212.

The protein belongs to the somatotropin/prolactin family. As to expression, pituitary gland.

Its subcellular location is the secreted. In Dicentrarchus labrax (European seabass), this protein is Prolactin (prl).